The sequence spans 308 residues: Pseudouridine-5'-phosphate glycosidase (308 aa).

The active-site Proton donor is Glu29. Lys90 and Val110 together coordinate substrate. Residue Asp142 participates in Mn(2+) binding. A substrate-binding site is contributed by 144 to 146 (SSD). Lys163 functions as the Nucleophile in the catalytic mechanism.

It belongs to the pseudouridine-5'-phosphate glycosidase family. Homotrimer. Mn(2+) serves as cofactor.

It carries out the reaction D-ribose 5-phosphate + uracil = psi-UMP + H2O. In terms of biological role, catalyzes the reversible cleavage of pseudouridine 5'-phosphate (PsiMP) to ribose 5-phosphate and uracil. Functions biologically in the cleavage direction, as part of a pseudouridine degradation pathway. This is Pseudouridine-5'-phosphate glycosidase from Serratia proteamaculans (strain 568).